A 192-amino-acid chain; its full sequence is Der GTPase-activating protein YihI (192 aa).

The segment covering Met-1–Gly-12 has biased composition (basic residues). Disordered regions lie at residues Met-1–Lys-87 and Asp-145–Lys-192. Positions Lys-13 to Glu-26 are enriched in basic and acidic residues. Residues Arg-27–Leu-36 show a composition bias toward basic residues. Positions Asp-145–Leu-172 are enriched in acidic residues. The span at Pro-183 to Lys-192 shows a compositional bias: basic and acidic residues.

It belongs to the YihI family. Interacts with Der.

Its function is as follows. A GTPase-activating protein (GAP) that modifies Der/EngA GTPase function. May play a role in ribosome biogenesis. This is Der GTPase-activating protein YihI from Aeromonas hydrophila subsp. hydrophila (strain ATCC 7966 / DSM 30187 / BCRC 13018 / CCUG 14551 / JCM 1027 / KCTC 2358 / NCIMB 9240 / NCTC 8049).